The primary structure comprises 1434 residues: DNA-directed RNA polymerase subunit beta (1434 aa).

It belongs to the RNA polymerase beta chain family. The RNAP catalytic core consists of 2 alpha, 1 beta, 1 beta' and 1 omega subunit. When a sigma factor is associated with the core the holoenzyme is formed, which can initiate transcription.

It carries out the reaction RNA(n) + a ribonucleoside 5'-triphosphate = RNA(n+1) + diphosphate. Its function is as follows. DNA-dependent RNA polymerase catalyzes the transcription of DNA into RNA using the four ribonucleoside triphosphates as substrates. The protein is DNA-directed RNA polymerase subunit beta of Ureaplasma parvum serovar 3 (strain ATCC 700970).